Consider the following 306-residue polypeptide: Serine/threonine-protein phosphatase PP2A-1 catalytic subunit (306 aa).

Mn(2+) contacts are provided by aspartate 54, histidine 56, aspartate 82, and asparagine 114. Catalysis depends on histidine 115, which acts as the Proton donor. Positions 164 and 238 each coordinate Mn(2+).

The protein belongs to the PPP phosphatase family. PP-2A subfamily. Mn(2+) is required as a cofactor.

The protein resides in the cytoplasm. It catalyses the reaction O-phospho-L-seryl-[protein] + H2O = L-seryl-[protein] + phosphate. The enzyme catalyses O-phospho-L-threonyl-[protein] + H2O = L-threonyl-[protein] + phosphate. This Oryza sativa subsp. indica (Rice) protein is Serine/threonine-protein phosphatase PP2A-1 catalytic subunit (PP2A1).